The chain runs to 599 residues: Serine/threonine-protein kinase Nek1 (599 aa).

The Protein kinase domain maps to 4 to 258 (YEVLEQIGKG…AAELLKHPHL (255 aa)). ATP-binding positions include 10–18 (IGKGAFGSA) and K33. Catalysis depends on D129, which acts as the Proton acceptor. 3 disordered regions span residues 364–386 (SIVK…EPPK), 461–482 (SEDP…PQHC), and 504–542 (DDDD…DTSS). Residues 511-530 (DSSSGRNNAAAAASSRAGSS) are compositionally biased toward low complexity.

The protein belongs to the protein kinase superfamily. NEK Ser/Thr protein kinase family. NIMA subfamily. In terms of tissue distribution, expressed in anthers, pistils and leaves.

The enzyme catalyses L-seryl-[protein] + ATP = O-phospho-L-seryl-[protein] + ADP + H(+). It carries out the reaction L-threonyl-[protein] + ATP = O-phospho-L-threonyl-[protein] + ADP + H(+). May be involved in plant development processes. In Oryza sativa subsp. japonica (Rice), this protein is Serine/threonine-protein kinase Nek1.